We begin with the raw amino-acid sequence, 395 residues long: Elongation factor Tu (395 aa).

Positions 10–205 constitute a tr-type G domain; it reads KVHMNVGTIG…AMDSYFEDPV (196 aa). Positions 19 to 26 are G1; that stretch reads GHVDHGKT. 19-26 lines the GTP pocket; that stretch reads GHVDHGKT. T26 contributes to the Mg(2+) binding site. The segment at 60 to 64 is G2; sequence GITIN. Residues 81 to 84 form a G3 region; it reads DCPG. GTP is bound by residues 81–85 and 136–139; these read DCPGH and NKVD. The G4 stretch occupies residues 136–139; that stretch reads NKVD. The segment at 173 to 175 is G5; it reads SAF.

This sequence belongs to the TRAFAC class translation factor GTPase superfamily. Classic translation factor GTPase family. EF-Tu/EF-1A subfamily. Monomer.

Its subcellular location is the cytoplasm. It catalyses the reaction GTP + H2O = GDP + phosphate + H(+). Functionally, GTP hydrolase that promotes the GTP-dependent binding of aminoacyl-tRNA to the A-site of ribosomes during protein biosynthesis. This chain is Elongation factor Tu, found in Treponema pallidum (strain Nichols).